The chain runs to 938 residues: Isoleucine--tRNA ligase (938 aa).

The short motif at 58-68 (PYANGSIHIGH) is the 'HIGH' region element. Lys183 carries the post-translational modification N6-acetyllysine. Glu561 is an L-isoleucyl-5'-AMP binding site. Residues 602–606 (KMSKS) carry the 'KMSKS' region motif. Residue Lys605 coordinates ATP. Zn(2+) is bound by residues Cys901, Cys904, Cys921, and Cys924.

It belongs to the class-I aminoacyl-tRNA synthetase family. IleS type 1 subfamily. As to quaternary structure, monomer. Requires Zn(2+) as cofactor.

Its subcellular location is the cytoplasm. It catalyses the reaction tRNA(Ile) + L-isoleucine + ATP = L-isoleucyl-tRNA(Ile) + AMP + diphosphate. Catalyzes the attachment of isoleucine to tRNA(Ile). As IleRS can inadvertently accommodate and process structurally similar amino acids such as valine, to avoid such errors it has two additional distinct tRNA(Ile)-dependent editing activities. One activity is designated as 'pretransfer' editing and involves the hydrolysis of activated Val-AMP. The other activity is designated 'posttransfer' editing and involves deacylation of mischarged Val-tRNA(Ile). This is Isoleucine--tRNA ligase from Escherichia coli O17:K52:H18 (strain UMN026 / ExPEC).